A 698-amino-acid polypeptide reads, in one-letter code: tRNA (guanine(37)-N(1))-methyltransferase (698 aa).

Positions 207–242 (SPPSVSLTENQDGDPQAQDSLRAVAAPPSPSSRKRG) are disordered. Residues His427, 465-466 (DL), 494-495 (DG), and Asn536 each bind S-adenosyl-L-methionine.

The protein belongs to the class I-like SAM-binding methyltransferase superfamily. TRM5/TYW2 family. In terms of assembly, monomer.

Its subcellular location is the mitochondrion matrix. The protein localises to the nucleus. The protein resides in the cytoplasm. The catalysed reaction is guanosine(37) in tRNA + S-adenosyl-L-methionine = N(1)-methylguanosine(37) in tRNA + S-adenosyl-L-homocysteine + H(+). Specifically methylates the N1 position of guanosine-37 in various cytoplasmic and mitochondrial tRNAs. Methylation is not dependent on the nature of the nucleoside 5' of the target nucleoside. This is the first step in the biosynthesis of wybutosine (yW), a modified base adjacent to the anticodon of tRNAs and required for accurate decoding. This is tRNA (guanine(37)-N(1))-methyltransferase from Leishmania braziliensis.